The chain runs to 334 residues: Photosystem II assembly protein Ycf48 (334 aa).

The first 22 residues, 1-22, serve as a signal peptide directing secretion; that stretch reads MAKMLKLWRLVLLAAFSLLLMA.

It belongs to the Ycf48 family. In terms of assembly, part of early PSII assembly complexes which includes D1 (psbA) and PsbI; not found in mature PSII. Binds to the lumenal side of PSII complexes. Interacts with YidC.

The protein localises to the cellular thylakoid lumen. A factor required for optimal assembly of photosystem II (PSII), acting in the early stages of PSII assembly. Also plays a role in replacement of photodamaged D1 (psbA). Assists YidC in synthesis of chlorophyll-binding proteins. The sequence is that of Photosystem II assembly protein Ycf48 from Synechococcus sp. (strain JA-3-3Ab) (Cyanobacteria bacterium Yellowstone A-Prime).